The primary structure comprises 122 residues: Large ribosomal subunit protein uL14c (122 aa).

It belongs to the universal ribosomal protein uL14 family. In terms of assembly, part of the 50S ribosomal subunit.

The protein resides in the plastid. It is found in the chloroplast. Functionally, binds to 23S rRNA. This Lemna minor (Common duckweed) protein is Large ribosomal subunit protein uL14c.